We begin with the raw amino-acid sequence, 125 residues long: uncharacterized protein (125 aa).

One can recognise a PRD domain in the interval 15 to 121; that stretch reads QINQSIIDVI…HSLVLEQKQL (107 aa).

This is an uncharacterized protein from Haemophilus influenzae (strain ATCC 51907 / DSM 11121 / KW20 / Rd).